Consider the following 214-residue polypeptide: Large ribosomal subunit protein uL3 (214 aa).

The residue at position 151 (Q151) is an N5-methylglutamine.

It belongs to the universal ribosomal protein uL3 family. As to quaternary structure, part of the 50S ribosomal subunit. Forms a cluster with proteins L14 and L19. Methylated by PrmB.

Its function is as follows. One of the primary rRNA binding proteins, it binds directly near the 3'-end of the 23S rRNA, where it nucleates assembly of the 50S subunit. The protein is Large ribosomal subunit protein uL3 of Saccharophagus degradans (strain 2-40 / ATCC 43961 / DSM 17024).